The following is a 234-amino-acid chain: Interleukin-27 subunit alpha (234 aa).

An N-terminal signal peptide occupies residues 1–28; the sequence is MGQVTGDLGWRLSLLLLPLLLVQAGSWG. Asparagine 85 carries N-linked (GlcNAc...) asparagine glycosylation. A disordered region spans residues 160–185; sequence KEEEDKEEEEEEEEEEKKLPLGALGG. Acidic residues predominate over residues 161–174; sequence EEEDKEEEEEEEEE.

It belongs to the IL-6 superfamily. As to quaternary structure, heterodimer with EBI3; not disulfide-linked. This heterodimer is known as interleukin IL-27. In terms of processing, O-glycosylated. Expressed in macrophages and dendritic cells.

The protein localises to the secreted. Its function is as follows. Associates with EBI3 to form the IL-27 interleukin, a heterodimeric cytokine which functions in innate immunity. IL-27 has pro- and anti-inflammatory properties, that can regulate T-helper cell development, suppress T-cell proliferation, stimulate cytotoxic T-cell activity, induce isotype switching in B-cells, and that has diverse effects on innate immune cells. Among its target cells are CD4 T-helper cells which can differentiate in type 1 effector cells (TH1), type 2 effector cells (TH2) and IL17 producing helper T-cells (TH17). It drives rapid clonal expansion of naive but not memory CD4 T-cells. It also strongly synergizes with IL-12 to trigger interferon-gamma/IFN-gamma production of naive CD4 T-cells, binds to the cytokine receptor WSX-1/TCCR which appears to be required but not sufficient for IL-27-mediated signal transduction. IL-27 potentiate the early phase of TH1 response and suppress TH2 and TH17 differentiation. It induces the differentiation of TH1 cells via two distinct pathways, p38 MAPK/TBX21- and ICAM1/ITGAL/ERK-dependent pathways. It also induces STAT1, STAT3, STAT4 and STAT5 phosphorylation and activates TBX21/T-Bet via STAT1 with resulting IL12RB2 up-regulation, an event crucial to TH1 cell commitment. It suppresses the expression of GATA3, the inhibitor TH1 cells development. In CD8 T-cells, it activates STATs as well as GZMB. IL-27 reveals to be a potent inhibitor of TH17 cell development and of IL-17 production. Indeed IL27 alone is also able to inhibit the production of IL17 by CD4 and CD8 T-cells. While IL-27 suppressed the development of pro-inflammatory Th17 cells via STAT1, it inhibits the development of anti-inflammatory inducible regulatory T-cells, iTreg, independently of STAT1. IL-27 also has an effect on cytokine production, it suppresses pro-inflammatory cytokine production such as IL2, IL4, IL5 and IL6 and activates suppressors of cytokine signaling such as SOCS1 and SOCS3. Apart from suppression of cytokine production, IL-27 also antagonizes the effects of some cytokines such as IL6 through direct effects on T-cells. Another important role of IL-27 is its antitumor activity as well as its antiangiogenic activity with activation of production of antiangiogenic chemokines such as IP-10/CXCL10 and MIG/CXCL9. In Mus musculus (Mouse), this protein is Interleukin-27 subunit alpha (Il27).